The chain runs to 328 residues: dTDP-3,4-didehydro-2,6-dideoxy-alpha-D-glucose 3-reductase (328 aa).

Residue arginine 20 participates in substrate binding. Residues serine 38–arginine 39, leucine 75, and histidine 80 each bind NADP(+). Lysine 98 functions as the Proton donor in the catalytic mechanism. Positions 166 and 178 each coordinate NADP(+). Residues tyrosine 236 and threonine 256 each coordinate substrate.

This sequence belongs to the Gfo/Idh/MocA family.

The catalysed reaction is dTDP-4-dehydro-2,6-dideoxy-alpha-D-glucose + NADP(+) = dTDP-3,4-didehydro-2,6-dideoxy-alpha-D-glucose + NADPH + H(+). The protein operates within antibiotic biosynthesis. Functionally, involved in the biosynthesis of one of the two 2,6-deoxysugars, dTDP-L-oleandrose, attached to the macrolactone ring oleandolide to produce the aglycone antibiotic oleandomycin. Catalyzes the reduction of the C-3 keto moiety of dTDP-3,4-diketo-2,6-dideoxy-alpha-D-glucose to yield dTDP-4-keto-2,6-dideoxy-alpha-D-glucose. NADPH is the better reductant, however NADH can also be used. The sequence is that of dTDP-3,4-didehydro-2,6-dideoxy-alpha-D-glucose 3-reductase from Streptomyces antibioticus.